Reading from the N-terminus, the 399-residue chain is MTNRVVLAYSGGLDTSVAIPYLAKMTGGEVVAVSLDLGQGGEDMESVRQRALDCGAVESIVIDAKDEFANDYCLPTIKANGMYMKQYPLVSAISRPLIVKHLVEAAKKHGGTHVSHGCTGKGNDQVRFEVGFRNLAPELQIIAPARDYAWTRDKAIAFAEEINLPIEQSKKSPFSIDQNVWGRAVETGFLEDLWNPPTKDLYSYTEDPALGNAPDEIIISFKAGVPVAIDGRPVTVLEAIEEMNRRAGAQGIGRLDMVEDRLVGIKSREVYEAPGAIALITAHQAMEDVTIERELARYKRGIDARWSEEVYDGLWYAPLKRSLDAFIENTQEHVTGDIRMVMHAGKCTVNGRRSEHSLYDFDLATYDTGDTFDQTLAKGFVELHGLSSKISNKRDREAQ.

An ATP-binding site is contributed by 8-16 (AYSGGLDTS). Tyrosine 87 is an L-citrulline binding site. Position 117 (glycine 117) interacts with ATP. Positions 119, 123, and 124 each coordinate L-aspartate. Asparagine 123 is a binding site for L-citrulline. Residues arginine 127, serine 175, glutamate 259, and tyrosine 271 each coordinate L-citrulline.

The protein belongs to the argininosuccinate synthase family. Type 1 subfamily. As to quaternary structure, homotetramer.

The protein resides in the cytoplasm. The enzyme catalyses L-citrulline + L-aspartate + ATP = 2-(N(omega)-L-arginino)succinate + AMP + diphosphate + H(+). The protein operates within amino-acid biosynthesis; L-arginine biosynthesis; L-arginine from L-ornithine and carbamoyl phosphate: step 2/3. This chain is Argininosuccinate synthase, found in Corynebacterium diphtheriae (strain ATCC 700971 / NCTC 13129 / Biotype gravis).